The chain runs to 224 residues: MGILGWVGLIAVGVLCVRGGLPSTEYVIRSRVAREVGDILKVPCVPLPSDDLDWRYETPSAINYALIDGIFLRYHCPGLDTVLWDRHAQKAYWVNPFLFVAGFLEDLSYPAFPANTQETETRLALYKEIRQALDSRKQAASHTPVKAGCVNFDYSRTRRCVGRQDLGPTNGTSGRTPVLPPDDEAGLQPKPLTTPPPIIATSDPTPRRDAATKSRRRRPHSRRL.

The N-terminal stretch at Met1–Gly19 is a signal peptide. Residues Gly20–Val161 form an interaction with gH region. Residues Ser23–Thr201 form the gL alphaherpesvirus-type domain. 2 disulfide bridges follow: Cys44–Cys76 and Cys149–Cys160. The tract at residues Val161–Leu224 is disordered. Positions Lys213–Leu224 are enriched in basic residues.

This sequence belongs to the herpesviridae glycoprotein L (gL) family. Alphaherpesvirinae gL subfamily. In terms of assembly, interacts with glycoprotein H (gH); this interaction is necessary for the correct processing and cell surface expression of gH. The heterodimer gH/gL seems to interact with gB trimers during fusion.

The protein localises to the virion membrane. Its subcellular location is the host cell membrane. It is found in the host Golgi apparatus. It localises to the host trans-Golgi network. Its function is as follows. The heterodimer glycoprotein H-glycoprotein L is required for the fusion of viral and plasma membranes leading to virus entry into the host cell. Acts as a functional inhibitor of gH and maintains gH in an inhibited form. Upon binding to host integrins, gL dissociates from gH leading to activation of the viral fusion glycoproteins gB and gH. The polypeptide is Envelope glycoprotein L (Human herpesvirus 1 (strain 17) (HHV-1)).